Reading from the N-terminus, the 374-residue chain is Chaperone protein DnaJ (374 aa).

The J domain maps to 5 to 70; the sequence is CYYEILNVSK…SKRSRYDQFG (66 aa). A CR-type zinc finger spans residues 130–207; the sequence is GVEKEITIPR…CYGNGKVKKQ (78 aa). Positions 143, 146, 159, 162, 181, 184, 195, and 198 each coordinate Zn(2+). CXXCXGXG motif repeat units lie at residues 143–150, 159–166, 181–188, and 195–202; these read CDSCDGTG, CHACHGQG, CPVCNGTG, and CDACYGNG.

It belongs to the DnaJ family. Homodimer. The cofactor is Zn(2+).

It is found in the cytoplasm. Participates actively in the response to hyperosmotic and heat shock by preventing the aggregation of stress-denatured proteins and by disaggregating proteins, also in an autonomous, DnaK-independent fashion. Unfolded proteins bind initially to DnaJ; upon interaction with the DnaJ-bound protein, DnaK hydrolyzes its bound ATP, resulting in the formation of a stable complex. GrpE releases ADP from DnaK; ATP binding to DnaK triggers the release of the substrate protein, thus completing the reaction cycle. Several rounds of ATP-dependent interactions between DnaJ, DnaK and GrpE are required for fully efficient folding. Also involved, together with DnaK and GrpE, in the DNA replication of plasmids through activation of initiation proteins. In Francisella tularensis subsp. tularensis (strain FSC 198), this protein is Chaperone protein DnaJ.